A 348-amino-acid chain; its full sequence is Pyruvate dehydrogenase E1 component subunit alpha (348 aa).

The interval 1 to 21 (MAPRKSASVSSRKTAAKPAKK) is disordered.

As to quaternary structure, heterodimer of an alpha and a beta chain. Thiamine diphosphate is required as a cofactor.

It catalyses the reaction N(6)-[(R)-lipoyl]-L-lysyl-[protein] + pyruvate + H(+) = N(6)-[(R)-S(8)-acetyldihydrolipoyl]-L-lysyl-[protein] + CO2. The pyruvate dehydrogenase complex catalyzes the overall conversion of pyruvate to acetyl-CoA and CO(2). It contains multiple copies of three enzymatic components: pyruvate dehydrogenase (E1), dihydrolipoamide acetyltransferase (E2) and lipoamide dehydrogenase (E3). This is Pyruvate dehydrogenase E1 component subunit alpha (pdhA) from Rhizobium meliloti (strain 1021) (Ensifer meliloti).